Reading from the N-terminus, the 456-residue chain is Ezy-1 protein (456 aa).

The first 28 residues, 1 to 28, serve as a signal peptide directing secretion; the sequence is MQLSSSLRSARSAAASSGCALASRPVVA. 3 disordered regions span residues 167-189, 273-310, and 414-456; these read SDGG…DGDG, FTGK…GGSG, and QPAG…SPNM. The span at 281-293 shows a compositional bias: acidic residues; it reads AEGDDGEDEEEGE. Residues 418–428 are compositionally biased toward basic and acidic residues; it reads DGHEPEPKRPE.

In Chlamydomonas reinhardtii (Chlamydomonas smithii), this protein is Ezy-1 protein (Ezy-1).